The primary structure comprises 315 residues: O-antigen chain rhamnosyltransferase WbaN (315 aa).

It belongs to the glycosyltransferase 2 family.

It catalyses the reaction alpha-D-galactosyl-di-trans,octa-cis-undecaprenyl diphosphate + dTDP-beta-L-rhamnose = alpha-L-rhamnosyl-(1-&gt;3)-alpha-D-galactosyl-1-diphospho-di-trans,octa-cis-undecaprenol + dTDP + H(+). It functions in the pathway bacterial outer membrane biogenesis; LPS O-antigen biosynthesis. In terms of biological role, rhamnosyltransferase involved in the biosynthesis of the repeat unit of the lipopolysaccharide (LPS) O-antigen region. Catalyzes the addition of a rhamnose to the galactosyl-undecaprenyl diphosphate intermediate. In Salmonella anatum, this protein is O-antigen chain rhamnosyltransferase WbaN.